Here is a 503-residue protein sequence, read N- to C-terminus: Aromatase (503 aa).

3 consecutive transmembrane segments (helical) span residues Glu-19–Trp-39, Gly-51–Gly-71, and Met-303–Ala-323. Substrate contacts are provided by Asp-309 and Met-374. A heme-binding site is contributed by Cys-437.

The protein belongs to the cytochrome P450 family. Requires heme as cofactor.

The protein resides in the endoplasmic reticulum membrane. It is found in the microsome membrane. It carries out the reaction testosterone + 3 reduced [NADPH--hemoprotein reductase] + 3 O2 = 17beta-estradiol + formate + 3 oxidized [NADPH--hemoprotein reductase] + 4 H2O + 4 H(+). The catalysed reaction is androst-4-ene-3,17-dione + 3 reduced [NADPH--hemoprotein reductase] + 3 O2 = estrone + formate + 3 oxidized [NADPH--hemoprotein reductase] + 4 H2O + 4 H(+). The enzyme catalyses androst-4-ene-3,17-dione + reduced [NADPH--hemoprotein reductase] + O2 = 19-hydroxyandrost-4-ene-3,17-dione + oxidized [NADPH--hemoprotein reductase] + H2O + H(+). It catalyses the reaction 19-hydroxyandrost-4-ene-3,17-dione + reduced [NADPH--hemoprotein reductase] + O2 = 19-oxo-androst-4-ene-3,17-dione + oxidized [NADPH--hemoprotein reductase] + 2 H2O + H(+). It carries out the reaction 19-oxo-androst-4-ene-3,17-dione + reduced [NADPH--hemoprotein reductase] + O2 = estrone + formate + oxidized [NADPH--hemoprotein reductase] + H2O + 2 H(+). The catalysed reaction is estrone + reduced [NADPH--hemoprotein reductase] + O2 = 2-hydroxyestrone + oxidized [NADPH--hemoprotein reductase] + H2O + H(+). The enzyme catalyses 17beta-hydroxy-5alpha-androstan-3-one + reduced [NADPH--hemoprotein reductase] + O2 = 17beta,19-dihydroxy-3-oxo-5alpha-androstanone + oxidized [NADPH--hemoprotein reductase] + H2O + H(+). It catalyses the reaction 17beta,19-dihydroxy-3-oxo-5alpha-androstanone + reduced [NADPH--hemoprotein reductase] + O2 = 17beta-hydroxy-3,19-dioxo-5alpha-androstanone + oxidized [NADPH--hemoprotein reductase] + 2 H2O + H(+). It carries out the reaction 17beta-hydroxy-3,19-dioxo-5alpha-androstanone + reduced [NADPH--hemoprotein reductase] + O2 = 17beta-hydroxy-3-oxo-19-nor-5alpha-androst-1-ene + formate + oxidized [NADPH--hemoprotein reductase] + H2O + 2 H(+). Its pathway is steroid hormone biosynthesis. Functionally, a cytochrome P450 monooxygenase that catalyzes the conversion of C19 androgens, androst-4-ene-3,17-dione (androstenedione) and testosterone to the C18 estrogens, estrone and estradiol, respectively. Catalyzes three successive oxidations of C19 androgens: two conventional oxidations at C19 yielding 19-hydroxy and 19-oxo/19-aldehyde derivatives, followed by a third oxidative aromatization step that involves C1-beta hydrogen abstraction combined with cleavage of the C10-C19 bond to yield a phenolic A ring and formic acid. Alternatively, the third oxidative reaction yields a 19-norsteroid and formic acid. Converts dihydrotestosterone to delta1,10-dehydro 19-nordihydrotestosterone and may play a role in homeostasis of this potent androgen. Also displays 2-hydroxylase activity toward estrone. Mechanistically, uses molecular oxygen inserting one oxygen atom into a substrate, and reducing the second into a water molecule, with two electrons provided by NADPH via cytochrome P450 reductase (CPR; NADPH-ferrihemoprotein reductase). In Canis lupus familiaris (Dog), this protein is Aromatase (CYP19A1).